Here is a 401-residue protein sequence, read N- to C-terminus: Nodal homolog 3-B (401 aa).

An N-terminal signal peptide occupies residues 1-18 (MALLNLFFCLVFSSPLMA). Residues 19 to 274 (MPPVLQGRKS…KVNGFRRLRR (256 aa)) constitute a propeptide that is removed on maturation. N-linked (GlcNAc...) asparagine glycans are attached at residues Asn168, Asn337, Asn341, and Asn344. Cystine bridges form between Cys299-Cys365 and Cys328-Cys396.

It belongs to the TGF-beta family. In terms of assembly, monomer. The propeptide region interacts with bmp4 in a non-covalent manner. As to expression, expressed in the dorsal marginal region of late blastula, becoming restricted to the dorsal blastopore lip (Spemann organizer) at the early gastrula stage.

It localises to the secreted. In terms of biological role, exhibits mesoderm-dorsalizing activity and neural-inducing activity, but lacks mesoderm-inducing activity. Regulates the expression of specific mesodermal and neural genes. Induces convergent extension movements at the embryonic midline by activating the fgf signaling pathway to induce t/bra expression in the organizer region. Acts with wnt11 to induce Spemann organizer cells and induce axis formation. The unprocessed protein antagonizes bmp-signaling. In Xenopus laevis (African clawed frog), this protein is Nodal homolog 3-B (nodal3-b).